A 313-amino-acid polypeptide reads, in one-letter code: Aspartate carbamoyltransferase catalytic subunit (313 aa).

Arg-58 and Thr-59 together coordinate carbamoyl phosphate. Lys-86 provides a ligand contact to L-aspartate. Carbamoyl phosphate-binding residues include Arg-108, His-136, and Gln-139. The L-aspartate site is built by Arg-169 and Arg-223. Carbamoyl phosphate contacts are provided by Gly-264 and Pro-265.

Belongs to the aspartate/ornithine carbamoyltransferase superfamily. ATCase family. As to quaternary structure, heterododecamer (2C3:3R2) of six catalytic PyrB chains organized as two trimers (C3), and six regulatory PyrI chains organized as three dimers (R2).

The enzyme catalyses carbamoyl phosphate + L-aspartate = N-carbamoyl-L-aspartate + phosphate + H(+). The protein operates within pyrimidine metabolism; UMP biosynthesis via de novo pathway; (S)-dihydroorotate from bicarbonate: step 2/3. In terms of biological role, catalyzes the condensation of carbamoyl phosphate and aspartate to form carbamoyl aspartate and inorganic phosphate, the committed step in the de novo pyrimidine nucleotide biosynthesis pathway. This chain is Aspartate carbamoyltransferase catalytic subunit, found in Syntrophotalea carbinolica (strain DSM 2380 / NBRC 103641 / GraBd1) (Pelobacter carbinolicus).